Here is a 162-residue protein sequence, read N- to C-terminus: NADH-quinone oxidoreductase subunit I (162 aa).

4Fe-4S ferredoxin-type domains follow at residues 54 to 83 (RRYENGEERCIACKLCEAVCPAMAITIESE) and 93 to 122 (TRYDIDLTKCIFCGFCEESCPVDSIVETQI). [4Fe-4S] cluster-binding residues include Cys63, Cys66, Cys69, Cys73, Cys102, Cys105, Cys108, and Cys112.

It belongs to the complex I 23 kDa subunit family. NDH-1 is composed of 14 different subunits. Subunits NuoA, H, J, K, L, M, N constitute the membrane sector of the complex. Requires [4Fe-4S] cluster as cofactor.

The protein localises to the cell inner membrane. It catalyses the reaction a quinone + NADH + 5 H(+)(in) = a quinol + NAD(+) + 4 H(+)(out). NDH-1 shuttles electrons from NADH, via FMN and iron-sulfur (Fe-S) centers, to quinones in the respiratory chain. The immediate electron acceptor for the enzyme in this species is believed to be ubiquinone. Couples the redox reaction to proton translocation (for every two electrons transferred, four hydrogen ions are translocated across the cytoplasmic membrane), and thus conserves the redox energy in a proton gradient. The chain is NADH-quinone oxidoreductase subunit I from Burkholderia thailandensis (strain ATCC 700388 / DSM 13276 / CCUG 48851 / CIP 106301 / E264).